Consider the following 270-residue polypeptide: Sulfur carrier protein FdhD (270 aa).

Cys116 serves as the catalytic Cysteine persulfide intermediate. 253–258 (FAREGK) is a Mo-bis(molybdopterin guanine dinucleotide) binding site.

The protein belongs to the FdhD family.

It localises to the cytoplasm. Its function is as follows. Required for formate dehydrogenase (FDH) activity. Acts as a sulfur carrier protein that transfers sulfur from IscS to the molybdenum cofactor prior to its insertion into FDH. The protein is Sulfur carrier protein FdhD of Haemophilus influenzae (strain 86-028NP).